A 275-amino-acid polypeptide reads, in one-letter code: MEIRLAKSYGFCFGVKRAIKIAEESPNSVTFGPLIHNKNEIDRLKEKYNVELVEEIDEIQENSRVVIRTHGIPKEKLALLKEKNVEVIDATCPFVTKPQEIVSKMSEEGYSIVIFGDINHPEIKGVMSYATDPIVVLSVEELEGKPLKEKVATVAQTTRKFEEYQKIVNYLMEHKKEVRVFNTICNATFENQDAARELSREADIMIIIGGKNSSNTKQLFKICKENCPDSYLVENAKELEKEWFEGKKVCGITAGASTPNWIIEEVIENIKKIQV.

Position 12 (Cys12) interacts with [4Fe-4S] cluster. His36 and His70 together coordinate (2E)-4-hydroxy-3-methylbut-2-enyl diphosphate. The dimethylallyl diphosphate site is built by His36 and His70. Isopentenyl diphosphate contacts are provided by His36 and His70. Cys92 serves as a coordination point for [4Fe-4S] cluster. His120 lines the (2E)-4-hydroxy-3-methylbut-2-enyl diphosphate pocket. His120 contacts dimethylallyl diphosphate. His120 contacts isopentenyl diphosphate. Glu122 functions as the Proton donor in the catalytic mechanism. Thr157 is a binding site for (2E)-4-hydroxy-3-methylbut-2-enyl diphosphate. Residue Cys185 participates in [4Fe-4S] cluster binding. 4 residues coordinate (2E)-4-hydroxy-3-methylbut-2-enyl diphosphate: Ser213, Ser214, Asn215, and Ser257. 4 residues coordinate dimethylallyl diphosphate: Ser213, Ser214, Asn215, and Ser257. 4 residues coordinate isopentenyl diphosphate: Ser213, Ser214, Asn215, and Ser257.

Belongs to the IspH family. [4Fe-4S] cluster serves as cofactor.

The catalysed reaction is isopentenyl diphosphate + 2 oxidized [2Fe-2S]-[ferredoxin] + H2O = (2E)-4-hydroxy-3-methylbut-2-enyl diphosphate + 2 reduced [2Fe-2S]-[ferredoxin] + 2 H(+). It carries out the reaction dimethylallyl diphosphate + 2 oxidized [2Fe-2S]-[ferredoxin] + H2O = (2E)-4-hydroxy-3-methylbut-2-enyl diphosphate + 2 reduced [2Fe-2S]-[ferredoxin] + 2 H(+). Its pathway is isoprenoid biosynthesis; dimethylallyl diphosphate biosynthesis; dimethylallyl diphosphate from (2E)-4-hydroxy-3-methylbutenyl diphosphate: step 1/1. The protein operates within isoprenoid biosynthesis; isopentenyl diphosphate biosynthesis via DXP pathway; isopentenyl diphosphate from 1-deoxy-D-xylulose 5-phosphate: step 6/6. Catalyzes the conversion of 1-hydroxy-2-methyl-2-(E)-butenyl 4-diphosphate (HMBPP) into a mixture of isopentenyl diphosphate (IPP) and dimethylallyl diphosphate (DMAPP). Acts in the terminal step of the DOXP/MEP pathway for isoprenoid precursor biosynthesis. This chain is 4-hydroxy-3-methylbut-2-enyl diphosphate reductase, found in Nitratiruptor sp. (strain SB155-2).